Reading from the N-terminus, the 363-residue chain is tRNA N6-adenosine threonylcarbamoyltransferase (363 aa).

Fe cation is bound by residues His138, His142, and Tyr159. Substrate contacts are provided by residues 159-163 (YVSGG), Asp191, Asp212, and Ser295. Fe cation is bound at residue Asp323.

Belongs to the KAE1 / TsaD family. Requires Fe(2+) as cofactor.

It localises to the cytoplasm. The catalysed reaction is L-threonylcarbamoyladenylate + adenosine(37) in tRNA = N(6)-L-threonylcarbamoyladenosine(37) in tRNA + AMP + H(+). In terms of biological role, required for the formation of a threonylcarbamoyl group on adenosine at position 37 (t(6)A37) in tRNAs that read codons beginning with adenine. Is probably involved in the transfer of the threonylcarbamoyl moiety of threonylcarbamoyl-AMP (TC-AMP) to the N6 group of A37. This chain is tRNA N6-adenosine threonylcarbamoyltransferase, found in Hyperthermus butylicus (strain DSM 5456 / JCM 9403 / PLM1-5).